The primary structure comprises 784 residues: Melanoma-associated antigen D1 (784 aa).

A disordered region spans residues 41–67 (PTNQATAAASGPNASPQSSQPPSANEV). Low complexity predominate over residues 47–65 (AAASGPNASPQSSQPPSAN). Position 97 is a phosphotyrosine (Tyr-97). Polar residues-rich tracts occupy residues 195–214 (PTAE…TSQA), 232–246 (AQTS…NLES), 259–269 (NNLNVEESSSG), and 306–320 (LAWQ…QPAR). Residues 195–339 (PTAETQTQNI…PARQTPPAWQ (145 aa)) are disordered. 19 tandem repeats follow at residues 302–307 (WQTPLA), 308–313 (WQNPSG), 314–319 (WQNQPA), 338–343 (WQNPVA), 344–349 (WQNPVI), 350–355 (WPNPVI), 356–361 (WQNPVI), 362–367 (WPNPIV), 368–373 (WPGPVV), 374–379 (WPNPLA), 380–385 (WQNPPG), 386–391 (WQTPPG), 392–397 (WQTPPG), 398–403 (WQGPPD), 404–409 (WQGPPD), 410–415 (WPLPPD), 416–421 (WPLPPD), 422–427 (WPLPTD), and 428–433 (WPLPPD). Residues 302-450 (WQTPLAWQNP…VPPDWQNLRP (149 aa)) form a 22 X 6 AA tandem repeats of W-[PQ]-X-P-X-X region. The interval 379 to 418 (AWQNPPGWQTPPGWQTPPGWQGPPDWQGPPDWPLPPDWPL) is disordered. The span at 383–403 (PPGWQTPPGWQTPPGWQGPPD) shows a compositional bias: low complexity. Residues 404-418 (WQGPPDWPLPPDWPL) show a composition bias toward pro residues. A 20; approximate repeat occupies 434–438 (WIPTD). A run of 2 repeats spans residues 439–444 (WPVPPD) and 445–450 (WQNLRP). The interval 441-471 (VPPDWQNLRPSPNLRPSPNSRASQNLGASQP) is disordered. Positions 447-461 (NLRPSPNLRPSPNSR) are enriched in low complexity. An MAGE domain is found at 477-675 (LQERANKLVK…RDWTAQFMEA (199 aa)).

As to quaternary structure, interacts with DLX5, DLX7 and MSX2 and forms homomultimers. Interacts with UNC5A. Interacts with TRIM28 and PJA1. Interacts with NGFR/p75NTR and RORA.

The protein localises to the cytoplasm. Its subcellular location is the cell membrane. The protein resides in the nucleus. Its function is as follows. Involved in the apoptotic response after nerve growth factor (NGF) binding in neuronal cells. Inhibits cell cycle progression, and facilitates NGFR-mediated apoptosis. May act as a regulator of the function of DLX family members. May enhance ubiquitin ligase activity of RING-type zinc finger-containing E3 ubiquitin-protein ligases. Proposed to act through recruitment and/or stabilization of the Ubl-conjugating enzyme (E2) at the E3:substrate complex. Plays a role in the circadian rhythm regulation. May act as RORA co-regulator, modulating the expression of core clock genes such as BMAL1 and NFIL3, induced, or NR1D1, repressed. The chain is Melanoma-associated antigen D1 (MAGED1) from Sus scrofa (Pig).